A 123-amino-acid polypeptide reads, in one-letter code: Large ribosomal subunit protein uL14c (123 aa).

This sequence belongs to the universal ribosomal protein uL14 family. Part of the 50S ribosomal subunit.

The protein resides in the plastid. Its subcellular location is the chloroplast. Binds to 23S rRNA. The sequence is that of Large ribosomal subunit protein uL14c from Oryza nivara (Indian wild rice).